The chain runs to 153 residues: Insulin-like growth factor 1 (153 aa).

The segment at 49 to 77 (GPETLCGAELVDALQFVCGDRGFYFNKPT) is b. Disulfide bonds link Cys-54–Cys-96, Cys-66–Cys-109, and Cys-95–Cys-100. Residues 78–89 (GYGSSSRRAPQT) form a c region. Positions 90 to 110 (GIVDECCFRSCDLRRLEMYCA) are a. The segment at 111–118 (PLKPAKSA) is d. The propeptide at 119–153 (RSVRAQRHTDMPKAQKEVHLKNASRGSAGNKNYRM) is e peptide. A disordered region spans residues 120-153 (SVRAQRHTDMPKAQKEVHLKNASRGSAGNKNYRM). Residues 125–138 (RHTDMPKAQKEVHL) are compositionally biased toward basic and acidic residues. A compositionally biased stretch (polar residues) spans 142-153 (SRGSAGNKNYRM).

Belongs to the insulin family. Forms a ternary complex with IGFR1 and ITGAV:ITGB3. Forms a ternary complex with IGFR1 and ITGA6:ITGB4. Forms a ternary complex with IGFBP3 and ALS.

The protein resides in the secreted. Its function is as follows. The insulin-like growth factors, isolated from plasma, are structurally and functionally related to insulin but have a much higher growth-promoting activity. May be a physiological regulator of [1-14C]-2-deoxy-D-glucose (2DG) transport and glycogen synthesis in osteoblasts. Stimulates glucose transport in bone-derived osteoblastic (PyMS) cells and is effective at much lower concentrations than insulin, not only regarding glycogen and DNA synthesis but also with regard to enhancing glucose uptake. May play a role in synapse maturation. Ca(2+)-dependent exocytosis of IGF1 is required for sensory perception of smell in the olfactory bulb. Acts as a ligand for IGF1R. Binds to the alpha subunit of IGF1R, leading to the activation of the intrinsic tyrosine kinase activity which autophosphorylates tyrosine residues in the beta subunit thus initiating a cascade of down-stream signaling events leading to activation of the PI3K-AKT/PKB and the Ras-MAPK pathways. Binds to integrins ITGAV:ITGB3 and ITGA6:ITGB4. Its binding to integrins and subsequent ternary complex formation with integrins and IGFR1 are essential for IGF1 signaling. Induces the phosphorylation and activation of IGFR1, MAPK3/ERK1, MAPK1/ERK2 and AKT1. As part of the MAPK/ERK signaling pathway, acts as a negative regulator of apoptosis in cardiomyocytes via promotion of STUB1/CHIP-mediated ubiquitination and degradation of ICER-type isoforms of CREM. The protein is Insulin-like growth factor 1 of Rhinopithecus roxellana (Golden snub-nosed monkey).